A 506-amino-acid polypeptide reads, in one-letter code: Maturase K (506 aa).

It belongs to the intron maturase 2 family. MatK subfamily.

It is found in the plastid. The protein resides in the chloroplast. Functionally, usually encoded in the trnK tRNA gene intron. Probably assists in splicing its own and other chloroplast group II introns. The sequence is that of Maturase K from Trifolium hybridum (Alsike clover).